The following is a 381-amino-acid chain: Succinyl-diaminopimelate desuccinylase (381 aa).

His-69 lines the Zn(2+) pocket. Residue Asp-71 is part of the active site. Asp-103 contacts Zn(2+). Glu-137 (proton acceptor) is an active-site residue. Zn(2+) contacts are provided by Glu-138, Glu-166, and His-355.

It belongs to the peptidase M20A family. DapE subfamily. In terms of assembly, homodimer. The cofactor is Zn(2+). Co(2+) is required as a cofactor.

It carries out the reaction N-succinyl-(2S,6S)-2,6-diaminopimelate + H2O = (2S,6S)-2,6-diaminopimelate + succinate. The protein operates within amino-acid biosynthesis; L-lysine biosynthesis via DAP pathway; LL-2,6-diaminopimelate from (S)-tetrahydrodipicolinate (succinylase route): step 3/3. In terms of biological role, catalyzes the hydrolysis of N-succinyl-L,L-diaminopimelic acid (SDAP), forming succinate and LL-2,6-diaminopimelate (DAP), an intermediate involved in the bacterial biosynthesis of lysine and meso-diaminopimelic acid, an essential component of bacterial cell walls. This is Succinyl-diaminopimelate desuccinylase from Rickettsia felis (strain ATCC VR-1525 / URRWXCal2) (Rickettsia azadi).